Reading from the N-terminus, the 78-residue chain is UPF0349 protein GK2958 (78 aa).

This sequence belongs to the UPF0349 family.

The sequence is that of UPF0349 protein GK2958 from Geobacillus kaustophilus (strain HTA426).